A 200-amino-acid chain; its full sequence is Small ribosomal subunit protein uS4 (200 aa).

The interval 22–43 (TGKELQKRPYPPGQHGPSQRRK) is disordered. One can recognise an S4 RNA-binding domain in the interval 92-152 (SRLDNLVYRL…EKSRNLQVIK (61 aa)).

Belongs to the universal ribosomal protein uS4 family. As to quaternary structure, part of the 30S ribosomal subunit. Contacts protein S5. The interaction surface between S4 and S5 is involved in control of translational fidelity.

Its function is as follows. One of the primary rRNA binding proteins, it binds directly to 16S rRNA where it nucleates assembly of the body of the 30S subunit. In terms of biological role, with S5 and S12 plays an important role in translational accuracy. This Geobacillus sp. (strain WCH70) protein is Small ribosomal subunit protein uS4.